The sequence spans 178 residues: Large ribosomal subunit protein bL25 (178 aa).

The protein belongs to the bacterial ribosomal protein bL25 family. CTC subfamily. In terms of assembly, part of the 50S ribosomal subunit; part of the 5S rRNA/L5/L18/L25 subcomplex. Contacts the 5S rRNA. Binds to the 5S rRNA independently of L5 and L18.

Its function is as follows. This is one of the proteins that binds to the 5S RNA in the ribosome where it forms part of the central protuberance. This is Large ribosomal subunit protein bL25 from Helicobacter pylori (strain P12).